The chain runs to 381 residues: Creatine kinase B-type (381 aa).

Position 4 is a phosphoserine (Ser-4). Residues 11 to 98 enclose the Phosphagen kinase N-terminal domain; it reads KLRFPAEDEF…FDPIIEDRHG (88 aa). Thr-35 is modified (phosphothreonine). Residue Lys-45 forms a Glycyl lysine isopeptide (Lys-Gly) (interchain with G-Cter in ubiquitin) linkage. A creatine-binding site is contributed by Val-72. Positions 96 to 110 are enriched in basic and acidic residues; sequence RHGGYKPSDEHKTDL. A disordered region spans residues 96–123; sequence RHGGYKPSDEHKTDLNPDNLQGGDDLDP. Residues Lys-101 and Lys-107 each participate in a glycyl lysine isopeptide (Lys-Gly) (interchain with G-Cter in ubiquitin) cross-link. Residue Tyr-125 is modified to Phosphotyrosine. The Phosphagen kinase C-terminal domain maps to 125–367; that stretch reads YVLSSRVRTG…KLLIEMEQRL (243 aa). Residues 128 to 132, Arg-130, Arg-132, and His-191 contribute to the ATP site; that span reads SSRVR. Residues 130-138 are internal MTS-like signal; that stretch reads RVRTGRSIR. Ser-199 carries the phosphoserine modification. Residue Glu-232 participates in creatine binding. Arg-236 serves as a coordination point for ATP. Tyr-269 carries the 3'-nitrotyrosine modification. Ser-285 lines the creatine pocket. Residues Arg-292, Arg-320, 320 to 325, and Asp-335 each bind ATP; that span reads RGTGGV. Thr-322 is subject to Phosphothreonine. Residue Lys-381 forms a Glycyl lysine isopeptide (Lys-Gly) (interchain with G-Cter in ubiquitin) linkage.

The protein belongs to the ATP:guanido phosphotransferase family. In terms of assembly, dimer of identical or non-identical chains, which can be either B (brain type) or M (muscle type). With MM being the major form in skeletal muscle and myocardium, MB existing in myocardium, and BB existing in many tissues, especially brain. Interacts with SLC12A6 (via C-terminus); the interaction may be required for SLC12A6 potassium-chloride cotransport activity. Post-translationally, ubiquitinated by the ECS(ASB9) complex, leading to its degradation by the proteasome.

The protein localises to the cytoplasm. It localises to the cytosol. Its subcellular location is the mitochondrion. The protein resides in the cell membrane. It carries out the reaction creatine + ATP = N-phosphocreatine + ADP + H(+). Reversibly catalyzes the transfer of phosphate between ATP and various phosphogens (e.g. creatine phosphate). Creatine kinase isoenzymes play a central role in energy transduction in tissues with large, fluctuating energy demands, such as skeletal muscle, heart, brain and spermatozoa. Acts as a key regulator of adaptive thermogenesis as part of the futile creatine cycle: localizes to the mitochondria of thermogenic fat cells and acts by mediating phosphorylation of creatine to initiate a futile cycle of creatine phosphorylation and dephosphorylation. During the futile creatine cycle, creatine and N-phosphocreatine are in a futile cycle, which dissipates the high energy charge of N-phosphocreatine as heat without performing any mechanical or chemical work. In Canis lupus familiaris (Dog), this protein is Creatine kinase B-type (CKB).